The chain runs to 167 residues: Ribosome maturation factor RimM (167 aa).

The PRC barrel domain occupies 94 to 166; sequence QNRAWLHELE…YIVVPRFDEF (73 aa).

This sequence belongs to the RimM family. As to quaternary structure, binds ribosomal protein uS19.

The protein localises to the cytoplasm. Functionally, an accessory protein needed during the final step in the assembly of 30S ribosomal subunit, possibly for assembly of the head region. Essential for efficient processing of 16S rRNA. May be needed both before and after RbfA during the maturation of 16S rRNA. It has affinity for free ribosomal 30S subunits but not for 70S ribosomes. This is Ribosome maturation factor RimM from Chlorobium phaeovibrioides (strain DSM 265 / 1930) (Prosthecochloris vibrioformis (strain DSM 265)).